Consider the following 232-residue polypeptide: Vesicle transport through interaction with t-SNAREs homolog 1B (232 aa).

An N-acetylalanine modification is found at A2. Interaction with CLINT1 stretches follow at residues 2–23 and 69–73; these read ATSA…GLHE and APLSF. Residues 2–208 are Cytoplasmic-facing; that stretch reads ATSAASSEHF…SRKVTTNKLL (207 aa). The stretch at 35–98 forms a coiled coil; it reads MAGTEEKKKL…AKLHREVRST (64 aa). T103 bears the Phosphothreonine mark. Position 107 is an omega-N-methylarginine (R107). S138 bears the Phosphoserine mark. Residues 161-198 are a coiled coil; it reads SEIIEELGEQRDQLERTKSRLVNTSENLSKSRKILRSM. A helical; Anchor for type IV membrane protein membrane pass occupies residues 209–229; sequence LSIVILLELAILGGLVYYKFL. Residues 230-232 are Vesicular-facing; sequence RRH.

The protein belongs to the VTI1 family. In terms of assembly, forms a SNARE complex with STX7, STX8 and VAMP8 which functions in the homotypic fusion of late endosomes. Component of the SNARE complex composed of STX7, STX8, VAMP7 and VIT1B that is required for heterotypic fusion of late endosomes with lysosomes. May interact with STX17. Interacts with CLINT1.

The protein resides in the early endosome membrane. It localises to the late endosome membrane. The protein localises to the lysosome membrane. It is found in the cytoplasmic granule. Its subcellular location is the recycling endosome membrane. Functionally, V-SNARE that mediates vesicle transport pathways through interactions with t-SNAREs on the target membrane. These interactions are proposed to mediate aspects of the specificity of vesicle trafficking and to promote fusion of the lipid bilayers. May be concerned with increased secretion of cytokines associated with cellular senescence. This Bos taurus (Bovine) protein is Vesicle transport through interaction with t-SNAREs homolog 1B (VTI1B).